Reading from the N-terminus, the 231-residue chain is Ferredoxin-type protein NapG (231 aa).

The tat-type signal signal peptide spans 1–41; the sequence is MSRSAKPQNGRRRFLRDVVRTAGGLAAVGVALGLQQQTARA. 4 consecutive 4Fe-4S ferredoxin-type domains span residues 50–81, 89–121, 130–166, and 177–208; these read GAIN…LATL, TPYF…REIE, LAVL…LELE, and FLPT…VLPL. Residues Cys-61, Cys-64, Cys-67, Cys-71, Cys-99, Cys-102, Cys-107, Cys-111, Cys-139, Cys-147, Cys-150, Cys-154, Cys-186, Cys-189, Cys-192, and Cys-196 each coordinate [4Fe-4S] cluster.

Requires [4Fe-4S] cluster as cofactor. Post-translationally, exported by the Tat system. The position of the signal peptide cleavage has not been experimentally proven.

It is found in the periplasm. Required for electron transfer from ubiquinol, via NapC, to the periplasmic nitrate reductase NapAB complex. This Escherichia coli (strain K12) protein is Ferredoxin-type protein NapG (napG).